The following is a 469-amino-acid chain: MSALTPPTDMPTPTTDKITQAAMETIYLCKFRVSMDGEWLCLRELDDISLTPDPEPTHEDPNYLMANERMNLMNMAKLSIKGLIESALNLGRTLDSDYAPLQQFFVVMEHCLKHGLKAKKTFLGQNKSFWGPLELVEKLVPEAAEITASVKDLPGLKTPVGRGRAWLRLALMQKKLSEYMKALINKKELLSEFYEANALMMEEEGAIIAGLLVGLNVIDANFCMKGEDLDSQVGVIDFSMYLKDGNSSKGSEGDGQITAILDQKNYVEELNRHLNATVNNLQAKVDALEKSNTKLTEELAVANNRIITLQEEMERVKEESSYLLESNRKGPKQDRTAEGQALSEARKHLKEETQLRLDVEKELELQISMRQEMELAMKMLEKDVCEKQDALVSLRQQLDDLRALKHELAFKLQSSDLGVKQKSELNSRLEEKTNQMAATIKQLEQSEKDLVKQAKTLNSAANKLIPKHH.

2 positions are modified to phosphothreonine: T5 and T12. A phosphoserine mark is found at S34 and S49. T51 bears the Phosphothreonine mark. Residues 95-227 (DSDYAPLQQF…IDANFCMKGE (133 aa)) form the RUN domain. Coiled coils occupy residues 271–362 (NRHL…VEKE) and 422–463 (KSEL…AANK).

Interacts with PAK1. Interacts (via C-terminus) with Ras-related Rab-5 proteins. Interacts (via C-terminus) with Ras-related Rap-2 proteins. Interacts with PIK3CA and PIK3R1. Interacts (via N-terminus) with FSCN1; this interaction induces neuron axon development. Interacts with DBN1. Interacts (via the second coiled coil) with GTP-, but not GDP-bound ARL8A and ARL8B. Interacts with dynactin/DCTN1 and the dynein intermediate chain DYNC1I1/2. Directly interacts with DYNC1LI1. Isoform 1 is partially phosphorylated. Phosphorylated by PAK1. As to expression, expressed in brain (at protein level).

It localises to the cytoplasm. The protein localises to the endomembrane system. Its subcellular location is the cell projection. The protein resides in the invadopodium. It is found in the growth cone. It localises to the perikaryon. The protein localises to the filopodium. Its subcellular location is the lamellipodium. The protein resides in the lysosome. Functionally, ARL8 effector that promotes the coupling of endolysosomes to dynein-dynactin for retrograde transport along microtubules. Acts by binding both GTP-bound ARL8 and dynein-dynactin. In nonneuronal cells, promotes concentration of endolysosomes in the juxtanuclear area. In hippocampal neurons, drives retrograde transport of endolysosomes from the axon to the soma. Plays a role in the generation of neuronal polarity formation and axon growth. Implicated in the formation of a single axon by developing neurons. May inhibit the formation of additional axons by inhibition of PI3K in minor neuronal processes. Plays a role in the formation of F-actin-enriched protrusive structures at the cell periphery. Plays a role in cytoskeletal organization by regulating the subcellular localization of FSCN1 and DBN1 at axonal growth cones. The polypeptide is Protein RUFY3 (Rattus norvegicus (Rat)).